A 188-amino-acid chain; its full sequence is ATP synthase subunit b 1 (188 aa).

The chain crosses the membrane as a helical span at residues 35-55 (VHFGSHLFWLAISFGLFYLFI).

This sequence belongs to the ATPase B chain family. As to quaternary structure, F-type ATPases have 2 components, F(1) - the catalytic core - and F(0) - the membrane proton channel. F(1) has five subunits: alpha(3), beta(3), gamma(1), delta(1), epsilon(1). F(0) has three main subunits: a(1), b(2) and c(10-14). The alpha and beta chains form an alternating ring which encloses part of the gamma chain. F(1) is attached to F(0) by a central stalk formed by the gamma and epsilon chains, while a peripheral stalk is formed by the delta and b chains.

It is found in the cell inner membrane. F(1)F(0) ATP synthase produces ATP from ADP in the presence of a proton or sodium gradient. F-type ATPases consist of two structural domains, F(1) containing the extramembraneous catalytic core and F(0) containing the membrane proton channel, linked together by a central stalk and a peripheral stalk. During catalysis, ATP synthesis in the catalytic domain of F(1) is coupled via a rotary mechanism of the central stalk subunits to proton translocation. In terms of biological role, component of the F(0) channel, it forms part of the peripheral stalk, linking F(1) to F(0). The protein is ATP synthase subunit b 1 of Bartonella henselae (strain ATCC 49882 / DSM 28221 / CCUG 30454 / Houston 1) (Rochalimaea henselae).